A 390-amino-acid chain; its full sequence is Putative methylesterase 11, chloroplastic (390 aa).

Residues 1–46 (MGNLCSLFTPPKPVKKRKPITKRQSSIGASSSGSGLNSNRWNNRVR) constitute a chloroplast transit peptide. Disordered regions lie at residues 1–52 (MGNL…SSRR) and 94–119 (QGSCSKKNQLPRSSSSRSRSSTDPLL). Residues 25–48 (SSIGASSSGSGLNSNRWNNRVRSS) show a composition bias toward low complexity. Residues 94-104 (QGSCSKKNQLP) show a composition bias toward polar residues. Residues 105–114 (RSSSSRSRSS) are compositionally biased toward low complexity. In terms of domain architecture, AB hydrolase-1 spans 137–241 (NHFVLVHGGS…KAVFLAAAML (105 aa)). D213 functions as the Acyl-ester intermediate in the catalytic mechanism. Catalysis depends on charge relay system residues D339 and H367.

The protein belongs to the AB hydrolase superfamily. Methylesterase family.

It localises to the plastid. Its subcellular location is the chloroplast. In terms of biological role, putative methylesterase. In Arabidopsis thaliana (Mouse-ear cress), this protein is Putative methylesterase 11, chloroplastic.